Consider the following 341-residue polypeptide: Holliday junction branch migration complex subunit RuvB (341 aa).

The interval 1–182 (MTDADPTLRP…FGIPTRLLFY (182 aa)) is large ATPase domain (RuvB-L). ATP is bound by residues L21, R22, G63, K66, T67, T68, 129–131 (EDF), R172, Y182, and R219. T67 contacts Mg(2+). The segment at 183–253 (TVDELFEIVS…LADHALTRLG (71 aa)) is small ATPAse domain (RuvB-S). Residues 256-341 (QLGLDGADRR…RPPGQSDLFG (86 aa)) are head domain (RuvB-H). Positions 292, 311, and 316 each coordinate DNA.

It belongs to the RuvB family. Homohexamer. Forms an RuvA(8)-RuvB(12)-Holliday junction (HJ) complex. HJ DNA is sandwiched between 2 RuvA tetramers; dsDNA enters through RuvA and exits via RuvB. An RuvB hexamer assembles on each DNA strand where it exits the tetramer. Each RuvB hexamer is contacted by two RuvA subunits (via domain III) on 2 adjacent RuvB subunits; this complex drives branch migration. In the full resolvosome a probable DNA-RuvA(4)-RuvB(12)-RuvC(2) complex forms which resolves the HJ.

The protein resides in the cytoplasm. It catalyses the reaction ATP + H2O = ADP + phosphate + H(+). In terms of biological role, the RuvA-RuvB-RuvC complex processes Holliday junction (HJ) DNA during genetic recombination and DNA repair, while the RuvA-RuvB complex plays an important role in the rescue of blocked DNA replication forks via replication fork reversal (RFR). RuvA specifically binds to HJ cruciform DNA, conferring on it an open structure. The RuvB hexamer acts as an ATP-dependent pump, pulling dsDNA into and through the RuvAB complex. RuvB forms 2 homohexamers on either side of HJ DNA bound by 1 or 2 RuvA tetramers; 4 subunits per hexamer contact DNA at a time. Coordinated motions by a converter formed by DNA-disengaged RuvB subunits stimulates ATP hydrolysis and nucleotide exchange. Immobilization of the converter enables RuvB to convert the ATP-contained energy into a lever motion, pulling 2 nucleotides of DNA out of the RuvA tetramer per ATP hydrolyzed, thus driving DNA branch migration. The RuvB motors rotate together with the DNA substrate, which together with the progressing nucleotide cycle form the mechanistic basis for DNA recombination by continuous HJ branch migration. Branch migration allows RuvC to scan DNA until it finds its consensus sequence, where it cleaves and resolves cruciform DNA. The polypeptide is Holliday junction branch migration complex subunit RuvB (Ruegeria pomeroyi (strain ATCC 700808 / DSM 15171 / DSS-3) (Silicibacter pomeroyi)).